The primary structure comprises 76 residues: UPF0346 protein OEOE_1017 (76 aa).

The protein belongs to the UPF0346 family.

In Oenococcus oeni (strain ATCC BAA-331 / PSU-1), this protein is UPF0346 protein OEOE_1017.